The following is a 93-amino-acid chain: Large ribosomal subunit protein bL27 (93 aa).

Residues 1-10 (MRFLLGLQYF) constitute a propeptide that is removed on maturation. The tract at residues 14 to 36 (KGVGSTKNGRDSESKRLGAKKSD) is disordered. Over residues 21-36 (NGRDSESKRLGAKKSD) the composition is skewed to basic and acidic residues.

Belongs to the bacterial ribosomal protein bL27 family. Post-translationally, the N-terminus is cleaved by ribosomal processing cysteine protease Prp.

The chain is Large ribosomal subunit protein bL27 from Mycoplasma capricolum subsp. capricolum (strain California kid / ATCC 27343 / NCTC 10154).